A 328-amino-acid chain; its full sequence is dTDP-4-dehydrorhamnose 3,5-epimerase (328 aa).

Substrate-binding positions include Arg-23, Glu-28, 46–48 (QEN), and Arg-58. The Proton acceptor role is filled by His-61. Residues Lys-70 and His-117 each contribute to the substrate site. Residue Tyr-130 is the Proton donor of the active site. Residues Glu-141 and Lys-166 each coordinate substrate.

Belongs to the dTDP-4-dehydrorhamnose 3,5-epimerase family. As to quaternary structure, homodimer.

It catalyses the reaction dTDP-4-dehydro-6-deoxy-alpha-D-glucose = dTDP-4-dehydro-beta-L-rhamnose. It functions in the pathway carbohydrate biosynthesis; dTDP-L-rhamnose biosynthesis. Its pathway is bacterial outer membrane biogenesis; LPS O-antigen biosynthesis. Functionally, catalyzes the epimerization of the C3' and C5'positions of dTDP-6-deoxy-D-xylo-4-hexulose, forming dTDP-6-deoxy-L-lyxo-4-hexulose. This chain is dTDP-4-dehydrorhamnose 3,5-epimerase (rfbC), found in Neisseria gonorrhoeae.